The sequence spans 216 residues: Fibroblast growth factor 17 (216 aa).

A signal peptide spans 1 to 22; it reads MGAARLLPNLTLCLQLLILCCQ. N-linked (GlcNAc...) asparagine glycosylation occurs at N137. The disordered stretch occupies residues 190 to 216; that stretch reads EKQKQFEFVGSAPTRRTKRTRRPQPLT. Positions 204–216 are enriched in basic residues; it reads RRTKRTRRPQPLT.

It belongs to the heparin-binding growth factors family. As to quaternary structure, interacts with FGFR3 and FGFR4. In terms of tissue distribution, preferentially expressed in the embryonic brain.

It is found in the secreted. Functionally, plays an important role in the regulation of embryonic development and as signaling molecule in the induction and patterning of the embryonic brain. Required for normal brain development. This Homo sapiens (Human) protein is Fibroblast growth factor 17 (FGF17).